A 107-amino-acid chain; its full sequence is Integration host factor subunit beta (107 aa).

Residues 82-101 (PGKELRERVDRRAGEPLKAE) are compositionally biased toward basic and acidic residues. The tract at residues 82-107 (PGKELRERVDRRAGEPLKAEDPDDDL) is disordered.

The protein belongs to the bacterial histone-like protein family. In terms of assembly, heterodimer of an alpha and a beta chain.

Its function is as follows. This protein is one of the two subunits of integration host factor, a specific DNA-binding protein that functions in genetic recombination as well as in transcriptional and translational control. This Paraburkholderia xenovorans (strain LB400) protein is Integration host factor subunit beta.